A 352-amino-acid polypeptide reads, in one-letter code: Protein-glutamate methylesterase/protein-glutamine glutaminase 2 (352 aa).

The region spanning 1–116 (MVVDDSAVVR…KQFLTDSADE (116 aa)) is the Response regulatory domain. At aspartate 50 the chain carries 4-aspartylphosphate. In terms of domain architecture, CheB-type methylesterase spans 162–352 (AQTTERIVAI…MAREIVTQLQ (191 aa)). Active-site residues include serine 174, histidine 200, and aspartate 296.

It belongs to the CheB family. Post-translationally, phosphorylated by CheA. Phosphorylation of the N-terminal regulatory domain activates the methylesterase activity.

It is found in the cytoplasm. It carries out the reaction [protein]-L-glutamate 5-O-methyl ester + H2O = L-glutamyl-[protein] + methanol + H(+). The catalysed reaction is L-glutaminyl-[protein] + H2O = L-glutamyl-[protein] + NH4(+). Functionally, involved in chemotaxis. Part of a chemotaxis signal transduction system that modulates chemotaxis in response to various stimuli. Catalyzes the demethylation of specific methylglutamate residues introduced into the chemoreceptors (methyl-accepting chemotaxis proteins or MCP) by CheR. Also mediates the irreversible deamidation of specific glutamine residues to glutamic acid. This is Protein-glutamate methylesterase/protein-glutamine glutaminase 2 from Xanthomonas campestris pv. campestris (strain ATCC 33913 / DSM 3586 / NCPPB 528 / LMG 568 / P 25).